Reading from the N-terminus, the 202-residue chain is Snake venom metalloproteinase Ac1 (202 aa).

The Peptidase M12B domain maps to 6-202; that stretch reads RYMEIVIVVD…ENPPCILNKP (197 aa). Positions 9 and 93 each coordinate Ca(2+). 2 cysteine pairs are disulfide-bonded: Cys117/Cys197 and Cys157/Cys181. His142 contacts Zn(2+). Glu143 is an active-site residue. Residues His146 and His152 each coordinate Zn(2+). Residues Cys197 and Asn200 each coordinate Ca(2+).

Belongs to the venom metalloproteinase (M12B) family. P-I subfamily. Monomer. It depends on Zn(2+) as a cofactor. In terms of tissue distribution, expressed by the venom gland.

The protein resides in the secreted. Its function is as follows. Snake venom metalloproteinase that impairs hemostasis in the envenomed animal. In Deinagkistrodon acutus (Hundred-pace snake), this protein is Snake venom metalloproteinase Ac1.